The sequence spans 69 residues: Sodium channel toxin (69 aa).

One can recognise an LCN-type CS-alpha/beta domain in the interval 2–66 (KNDYPVDTAK…SPTKTSGRCN (65 aa)). Intrachain disulfides connect cysteine 14–cysteine 65, cysteine 18–cysteine 41, cysteine 27–cysteine 48, and cysteine 31–cysteine 50.

Belongs to the long (4 C-C) scorpion toxin superfamily. Sodium channel inhibitor family. Expressed by the venom gland.

The protein resides in the secreted. Functionally, inhibits voltage-gated sodium channels (Nav). This Tityus metuendus (Scorpion) protein is Sodium channel toxin.